The sequence spans 344 residues: Anthranilate phosphoribosyltransferase (344 aa).

Residues G85, 88-89 (GD), T93, 95-98 (NIST), 113-121 (KHGGRSVSS), and S125 contribute to the 5-phospho-alpha-D-ribose 1-diphosphate site. G85 lines the anthranilate pocket. S97 contributes to the Mg(2+) binding site. R171 is an anthranilate binding site. Mg(2+)-binding residues include D230 and E231.

It belongs to the anthranilate phosphoribosyltransferase family. As to quaternary structure, homodimer. Mg(2+) serves as cofactor.

The enzyme catalyses N-(5-phospho-beta-D-ribosyl)anthranilate + diphosphate = 5-phospho-alpha-D-ribose 1-diphosphate + anthranilate. Its pathway is amino-acid biosynthesis; L-tryptophan biosynthesis; L-tryptophan from chorismate: step 2/5. Its function is as follows. Catalyzes the transfer of the phosphoribosyl group of 5-phosphorylribose-1-pyrophosphate (PRPP) to anthranilate to yield N-(5'-phosphoribosyl)-anthranilate (PRA). This chain is Anthranilate phosphoribosyltransferase, found in Acidovorax ebreus (strain TPSY) (Diaphorobacter sp. (strain TPSY)).